We begin with the raw amino-acid sequence, 125 residues long: Small ribosomal subunit protein eS6 (125 aa).

It belongs to the eukaryotic ribosomal protein eS6 family.

The protein is Small ribosomal subunit protein eS6 of Pyrococcus horikoshii (strain ATCC 700860 / DSM 12428 / JCM 9974 / NBRC 100139 / OT-3).